The chain runs to 144 residues: HTH-type transcriptional repressor NsrR (144 aa).

In terms of domain architecture, HTH rrf2-type spans 2 to 129 (QLTSFTDYGL…DKHTLLSLID (128 aa)). The H-T-H motif DNA-binding region spans 28–51 (ISKVTEVYGVSRNHMVKIINKLGQ). Residues Cys91, Cys96, and Cys102 each coordinate [2Fe-2S] cluster.

It depends on [2Fe-2S] cluster as a cofactor.

In terms of biological role, nitric oxide-sensitive repressor of genes involved in protecting the cell against nitrosative stress. May require iron for activity. The polypeptide is HTH-type transcriptional repressor NsrR (Photobacterium profundum (strain SS9)).